Consider the following 204-residue polypeptide: Nascent polypeptide-associated complex subunit alpha (204 aa).

A compositionally biased stretch (basic and acidic residues) spans 1–19 (MADPRVEELPDEEVPKTNV). Disordered stretches follow at residues 1–48 (MADP…HSRN) and 119–167 (LAAA…GLEA). Positions 22–32 (AGSDSESEAGE) are enriched in acidic residues. In terms of domain architecture, NAC-A/B spans 46 to 111 (SRNEKKARKA…AKIEDLNSQA (66 aa)). Residues 119–128 (LAAAEAAAGE) show a composition bias toward low complexity. A compositionally biased stretch (basic and acidic residues) spans 129 to 151 (HAGHDHDHDHGKGKAPETEAKKE). Residues 152–164 (EEEDDGEEVDETG) are compositionally biased toward acidic residues. The UBA domain maps to 165–204 (LEAKDIELVMAQANVSRKKAVKALRENDNDIVNSIMALSI).

Belongs to the NAC-alpha family. In terms of assembly, part of the nascent polypeptide-associated complex (NAC), consisting of egd2 and egd1. NAC associates with ribosomes via egd1.

It localises to the cytoplasm. It is found in the nucleus. Its function is as follows. Component of the nascent polypeptide-associated complex (NAC), a dynamic component of the ribosomal exit tunnel, protecting the emerging polypeptides from interaction with other cytoplasmic proteins to ensure appropriate nascent protein targeting. The NAC complex also promotes mitochondrial protein import by enhancing productive ribosome interactions with the outer mitochondrial membrane and blocks the inappropriate interaction of ribosomes translating non-secretory nascent polypeptides with translocation sites in the membrane of the endoplasmic reticulum. Egd2 may also be involved in transcription regulation. The sequence is that of Nascent polypeptide-associated complex subunit alpha (egd2) from Aspergillus clavatus (strain ATCC 1007 / CBS 513.65 / DSM 816 / NCTC 3887 / NRRL 1 / QM 1276 / 107).